Consider the following 389-residue polypeptide: MSEYLFTSESVSEGHPDKVADQVSDAILDAILAQDPKARVAAETLVNTGLCVLAGEITTTAQVDYIKVARETIKRIGYNSSELGFDANGCAVGVYYDQQSPDIAQGVNEGEGIDLNQGAGDQGLMFGYACDETPTLMPFAIYYSHRLMQRQSELRKDGRLPWLRPDAKAQLTVVYDSETGKVKRIDTVVLSTQHDPSIAYEELKNAVIEHIIKPVLPSELLTDETKYLINPTGRFVIGGPQGDCGLTGRKIIVDTYGGAAPHGGGAFSGKDPSKVDRSAAYACRYVAKNIVAAGLATQCQIQVSYAIGVAEPTSISIDTFGTGKISEEKLIALVREHFDLRPKGIVQMLDLLRPIYSKSAAYGHFGREEPEFTWERTDKAAALRAAAGL.

An ATP-binding site is contributed by H15. D17 contacts Mg(2+). E43 serves as a coordination point for K(+). Residues E56 and Q99 each contribute to the L-methionine site. The tract at residues Q99–E109 is flexible loop. Residues D166 to K168, R234 to F235, D243, R249 to K250, A266, and K270 contribute to the ATP site. D243 is a binding site for L-methionine. L-methionine is bound at residue K274.

The protein belongs to the AdoMet synthase family. As to quaternary structure, homotetramer; dimer of dimers. Mg(2+) serves as cofactor. The cofactor is K(+).

It is found in the cytoplasm. The catalysed reaction is L-methionine + ATP + H2O = S-adenosyl-L-methionine + phosphate + diphosphate. It functions in the pathway amino-acid biosynthesis; S-adenosyl-L-methionine biosynthesis; S-adenosyl-L-methionine from L-methionine: step 1/1. Catalyzes the formation of S-adenosylmethionine (AdoMet) from methionine and ATP. The overall synthetic reaction is composed of two sequential steps, AdoMet formation and the subsequent tripolyphosphate hydrolysis which occurs prior to release of AdoMet from the enzyme. This chain is S-adenosylmethionine synthase, found in Neisseria meningitidis serogroup B (strain ATCC BAA-335 / MC58).